Reading from the N-terminus, the 446-residue chain is C4-dicarboxylate transport protein 2 (446 aa).

Helical transmembrane passes span 7–26 (PLFG…GIWA), 46–64 (MLIA…CGAG), 77–99 (VIYF…YAFG), 152–171 (ILQV…LLGE), 192–211 (AVVI…FTVG), 221–243 (LGFL…LGGI), 291–313 (VVGL…YLTL), 318–340 (IAQA…VALI), 353–375 (IVIL…VLVL), and 381–403 (IGIA…IAAW).

Belongs to the dicarboxylate/amino acid:cation symporter (DAACS) (TC 2.A.23) family.

It is found in the cell inner membrane. Functionally, responsible for the transport of dicarboxylates such as succinate, fumarate, and malate from the periplasm across the membrane. In Ralstonia nicotianae (strain ATCC BAA-1114 / GMI1000) (Ralstonia solanacearum), this protein is C4-dicarboxylate transport protein 2 (dctA2).